The chain runs to 278 residues: NAD kinase (278 aa).

The active-site Proton acceptor is the D56. Residues 56–57 (DG), 132–133 (NE), R158, D160, and 171–176 (TAYNKS) each bind NAD(+).

It belongs to the NAD kinase family. A divalent metal cation serves as cofactor.

It localises to the cytoplasm. It catalyses the reaction NAD(+) + ATP = ADP + NADP(+) + H(+). In terms of biological role, involved in the regulation of the intracellular balance of NAD and NADP, and is a key enzyme in the biosynthesis of NADP. Catalyzes specifically the phosphorylation on 2'-hydroxyl of the adenosine moiety of NAD to yield NADP. The sequence is that of NAD kinase from Streptococcus pyogenes serotype M1.